We begin with the raw amino-acid sequence, 314 residues long: Putative S-adenosyl-L-methionine-dependent methyltransferase MAP_4191c (314 aa).

Residues aspartate 138 and 167–168 each bind S-adenosyl-L-methionine; that span reads DL.

Belongs to the UPF0677 family.

Functionally, exhibits S-adenosyl-L-methionine-dependent methyltransferase activity. The protein is Putative S-adenosyl-L-methionine-dependent methyltransferase MAP_4191c of Mycolicibacterium paratuberculosis (strain ATCC BAA-968 / K-10) (Mycobacterium paratuberculosis).